We begin with the raw amino-acid sequence, 163 residues long: Transcriptional repressor NrdR (163 aa).

A zinc finger lies at Cys3–Cys34. The ATP-cone domain occupies Leu46–Asp136.

This sequence belongs to the NrdR family. The cofactor is Zn(2+).

Functionally, negatively regulates transcription of bacterial ribonucleotide reductase nrd genes and operons by binding to NrdR-boxes. This Renibacterium salmoninarum (strain ATCC 33209 / DSM 20767 / JCM 11484 / NBRC 15589 / NCIMB 2235) protein is Transcriptional repressor NrdR.